The chain runs to 463 residues: 6-phosphofructo-2-kinase/fructose-2,6-bisphosphatase 3 (463 aa).

Residues 1–246 (MPLELTQSRV…VYYLMNIHWQ (246 aa)) form a 6-phosphofructo-2-kinase region. 42 to 50 (GLPARGKTY) serves as a coordination point for ATP. The beta-D-fructose 6-phosphate site is built by arginine 75 and arginine 99. Aspartate 125 is an active-site residue. Residues threonine 127 and arginine 133 each contribute to the beta-D-fructose 6-phosphate site. Cysteine 155 is an active-site residue. 164–169 (NIMEVK) serves as a coordination point for ATP. Residues lysine 169, arginine 191, and tyrosine 195 each contribute to the beta-D-fructose 6-phosphate site. Residues 247-463 (PRTIYLCRHG…PNPLMRSNSH (217 aa)) form a fructose-2,6-bisphosphatase region. Arginine 254 lines the beta-D-fructose 2,6-bisphosphate pocket. Residue histidine 255 is the Tele-phosphohistidine intermediate of the active site. Asparagine 261 and glycine 267 together coordinate beta-D-fructose 2,6-bisphosphate. Glutamate 324 serves as the catalytic Proton donor/acceptor. Tyrosine 335 serves as a coordination point for beta-D-fructose 2,6-bisphosphate. ATP is bound at residue 346 to 349 (YALA). Lysine 353, tyrosine 364, and glutamine 390 together coordinate beta-D-fructose 2,6-bisphosphate. Residues 390 to 394 (QAVCV) and tyrosine 426 each bind ATP. The interval 444–463 (RERSEDAKKGPNPLMRSNSH) is disordered. Serine 462 is modified (phosphoserine; by AMPK and PKA).

The protein in the C-terminal section; belongs to the phosphoglycerate mutase family. In terms of assembly, homodimer. Forms a heterodimer with PFKFB2. In terms of processing, phosphorylation by AMPK stimulates activity. As to expression, brain.

It carries out the reaction beta-D-fructose 2,6-bisphosphate + H2O = beta-D-fructose 6-phosphate + phosphate. The enzyme catalyses beta-D-fructose 6-phosphate + ATP = beta-D-fructose 2,6-bisphosphate + ADP + H(+). Catalyzes both the synthesis and degradation of fructose 2,6-bisphosphate. This is 6-phosphofructo-2-kinase/fructose-2,6-bisphosphatase 3 (PFKFB3) from Bos taurus (Bovine).